Reading from the N-terminus, the 214-residue chain is Calcineurin B homologous protein 3 (214 aa).

G2 is lipidated: N-myristoyl glycine. An EF-hand domain is found at 110–145; that stretch reads FRKEKLKFLFHMYDADYDGIITLQEYKNVLDELMSG. 4 residues coordinate Ca(2+): D123, D125, D127, and E134.

The protein belongs to the calcineurin regulatory subunit family. CHP subfamily. In terms of assembly, monomer. Homodimer. Expressed in the bipotential gonad by E4.5 and expressed in both the testis and ovary by E5.5, but with expression higher in the testis. Expressed in the testis cords but also at low levels in the interstitium. In the ovary, expression is principally in the ovarian cortex, but also in the medulla. Also expressed in the embryonic brain, with expression highest in the region between the nasal placode and olfactory bulb. Also expressed in the embryonic heart and tail.

It localises to the nucleus. The protein resides in the cytoplasm. The protein localises to the membrane. It is found in the cell membrane. Its subcellular location is the cell projection. It localises to the lamellipodium. The protein resides in the ruffle membrane. Functionally, functions as an integral cofactor in cell pH regulation by controlling plasma membrane-type Na(+)/H(+) exchange activity. Promotes the induction of hematopoietic stem cell differentiation toward megakaryocytic lineage. Essential for the coupling of ERK cascade activation with the expression of ETS family genes in megakaryocytic differentiation. Also involved in granulocytic differentiation in a ERK-dependent manner. Inhibits the phosphatase activity of calcineurin. The sequence is that of Calcineurin B homologous protein 3 from Gallus gallus (Chicken).